Here is a 261-residue protein sequence, read N- to C-terminus: Imidazole glycerol phosphate synthase subunit HisF (261 aa).

Catalysis depends on residues Asp11 and Asp130.

This sequence belongs to the HisA/HisF family. In terms of assembly, heterodimer of HisH and HisF.

The protein resides in the cytoplasm. The catalysed reaction is 5-[(5-phospho-1-deoxy-D-ribulos-1-ylimino)methylamino]-1-(5-phospho-beta-D-ribosyl)imidazole-4-carboxamide + L-glutamine = D-erythro-1-(imidazol-4-yl)glycerol 3-phosphate + 5-amino-1-(5-phospho-beta-D-ribosyl)imidazole-4-carboxamide + L-glutamate + H(+). It participates in amino-acid biosynthesis; L-histidine biosynthesis; L-histidine from 5-phospho-alpha-D-ribose 1-diphosphate: step 5/9. IGPS catalyzes the conversion of PRFAR and glutamine to IGP, AICAR and glutamate. The HisF subunit catalyzes the cyclization activity that produces IGP and AICAR from PRFAR using the ammonia provided by the HisH subunit. This chain is Imidazole glycerol phosphate synthase subunit HisF, found in Heliobacterium mobile (Heliobacillus mobilis).